The chain runs to 529 residues: MPMSLGNAFIKNFLGKAPDWYKVAIISFLIINPIVFFFVDPFVAGWLLVVEFIFTLAMALKCYPLQPGGLLAIEAIAIGMTSPEQVKHELVANIEVLLLLVFMVAGIYFMKQLLLFIFTKILLGIRSKAILSLAFCFAAAFLSAFLDALTVIAVVISVAVGFYSIYHKVASGKGVSSDHDHTQDDHLAELTRDDLENYRAFLRSLLMHAGVGTALGGVTTMVGEPQNLIIADQASWLFGEFLIRMAPVTLPVFVCGLLTCFAVEKLKVFGYGAELPDNVRHILVEFDKEERKARTNQDVAKLWIQGLIAVWLIVGLALHLAAVGLIGLSVIILATAFTGVIEEHSLGKAFEEALPFTALLAVFFSIVAVIIDQELFKPVIDAVLAVEDKGTQLAMFYVANGLLSMVSDNVFVGTVYINEVKTALVEGIITRDQFDLLAVAINTGTNLPSVATPNGQAAFLFLLTSALAPLIRLSYGKMVIMALPYTIVLALVGLFGIVFLLEPMTTWFYDAGWIAHHVGEATHAVSGGH.

12 helical membrane passes run 13–33 (FLGK…IINP), 34–54 (IVFF…EFIF), 90–110 (LVAN…IYFM), 113–133 (LLLF…ILSL), 149–166 (LTVI…YSIY), 205–225 (LLMH…VGEP), 241–261 (FLIR…LTCF), 306–326 (GLIA…VGLI), 327–347 (GLSV…HSLG), 351–371 (EEAL…AVII), 451–471 (ATPN…APLI), and 479–499 (VIMA…GIVF).

This sequence belongs to the NhaB Na(+)/H(+) (TC 2.A.34) antiporter family.

The protein localises to the cell inner membrane. The enzyme catalyses 2 Na(+)(in) + 3 H(+)(out) = 2 Na(+)(out) + 3 H(+)(in). Na(+)/H(+) antiporter that extrudes sodium in exchange for external protons. In Vibrio vulnificus (strain YJ016), this protein is Na(+)/H(+) antiporter NhaB.